The sequence spans 166 residues: Small ribosomal subunit protein uS5 (166 aa).

Positions 12–75 (YIEKLVQVNR…EAARRNMIQV (64 aa)) constitute an S5 DRBM domain.

The protein belongs to the universal ribosomal protein uS5 family. In terms of assembly, part of the 30S ribosomal subunit. Contacts proteins S4 and S8.

Functionally, with S4 and S12 plays an important role in translational accuracy. In terms of biological role, located at the back of the 30S subunit body where it stabilizes the conformation of the head with respect to the body. This Pseudomonas fluorescens (strain SBW25) protein is Small ribosomal subunit protein uS5.